A 223-amino-acid polypeptide reads, in one-letter code: Killer cell lectin-like receptor subfamily B member 1A (223 aa).

The Cytoplasmic portion of the chain corresponds to 1-43; that stretch reads MDTARVYLSLKPSKTAAGAQCVSPPSLPPDACRCPRSHRLALK. An LCK-binding motif motif is present at residues 32–35; the sequence is CRCP. Residues 44–63 traverse the membrane as a helical; Signal-anchor for type II membrane protein segment; the sequence is LSCAGLILLVLALVGMSILV. At 64-223 the chain is on the extracellular side; it reads RVLVQKPSVE…LKCECMCNDS (160 aa). The 120-residue stretch at 93–212 folds into the C-type lectin domain; that stretch reads KCPKDWLSHR…DSDNIWVCQK (120 aa). Intrachain disulfides connect cysteine 94-cysteine 105, cysteine 122-cysteine 210, and cysteine 189-cysteine 202.

In terms of assembly, homodimer; disulfide-linked. Interacts with tyrosine kinase LCK. As to expression, expressed in natural killer cells.

It is found in the membrane. Functionally, plays a stimulatory role on natural killer (NK) cell cytotoxicity. The polypeptide is Killer cell lectin-like receptor subfamily B member 1A (Klrb1a) (Rattus norvegicus (Rat)).